The chain runs to 286 residues: UDP-3-O-acyl-N-acetylglucosamine deacetylase (286 aa).

Positions 79, 237, and 241 each coordinate Zn(2+). H264 serves as the catalytic Proton donor.

It belongs to the LpxC family. Requires Zn(2+) as cofactor.

It catalyses the reaction a UDP-3-O-[(3R)-3-hydroxyacyl]-N-acetyl-alpha-D-glucosamine + H2O = a UDP-3-O-[(3R)-3-hydroxyacyl]-alpha-D-glucosamine + acetate. It participates in glycolipid biosynthesis; lipid IV(A) biosynthesis; lipid IV(A) from (3R)-3-hydroxytetradecanoyl-[acyl-carrier-protein] and UDP-N-acetyl-alpha-D-glucosamine: step 2/6. Catalyzes the hydrolysis of UDP-3-O-myristoyl-N-acetylglucosamine to form UDP-3-O-myristoylglucosamine and acetate, the committed step in lipid A biosynthesis. The polypeptide is UDP-3-O-acyl-N-acetylglucosamine deacetylase (Chlamydia trachomatis serovar L2 (strain ATCC VR-902B / DSM 19102 / 434/Bu)).